The sequence spans 487 residues: Phosphatidylserine synthase 2 (487 aa).

Residues 1-10 show a composition bias toward basic and acidic residues; sequence MRRGERRDAG. The disordered stretch occupies residues 1–50; that stretch reads MRRGERRDAGGPRPESPVPAGRASLEEPPDGPSAGQATGPGEGRRSTESE. The Cytoplasmic segment spans residues 1-62; that stretch reads MRRGERRDAG…DDGTNTFFWR (62 aa). A phosphoserine mark is found at Ser-16 and Ser-24. The chain crosses the membrane as a helical span at residues 63-83; that stretch reads AHTLTVLFILTCTLGYVTLLE. Residues 84-96 lie on the Lumenal side of the membrane; it reads ETPQDTAYNTKRG. A helical transmembrane segment spans residues 97–117; it reads IVASILVFLCFGVTQAKDGPF. Residues 118–126 lie on the Cytoplasmic side of the membrane; that stretch reads SRPHPAYWR. A helical membrane pass occupies residues 127–147; sequence FWLCVSVVYELFLIFILFQTV. Residues 148–313 lie on the Lumenal side of the membrane; that stretch reads QDGRQFLKYV…EWKPASSLRR (166 aa). Residue Asn-181 is glycosylated (N-linked (GlcNAc...) asparagine). The helical transmembrane segment at 314–334 threads the bilayer; the sequence is WLAVCGIILVFLLAELNTFYL. Position 335 (Lys-335) is a topological domain, cytoplasmic. Residues 336–356 traverse the membrane as a helical segment; that stretch reads FVLWMPPEHYLVLLRLVFFVN. The Lumenal portion of the chain corresponds to 357–376; sequence VGGVAMREIYDFMDDPKPHK. The chain crosses the membrane as a helical span at residues 377-397; it reads KLGPQAWLVAAITATELLIVV. The Cytoplasmic portion of the chain corresponds to 398 to 403; it reads KYDPHT. The chain crosses the membrane as a helical span at residues 404–424; sequence LTLSLPFYISQCWTLGSVLAL. Topologically, residues 425-487 are lumenal; that stretch reads TWTVWRFFLR…AEGEGAPTPN (63 aa). The disordered stretch occupies residues 451-487; that stretch reads KDDQGSTVGNGDQHPLGLDEDLLGPGVAEGEGAPTPN. Residue Thr-485 is modified to Phosphothreonine.

Belongs to the phosphatidyl serine synthase family.

Its subcellular location is the endoplasmic reticulum membrane. It carries out the reaction a 1,2-diacyl-sn-glycero-3-phosphoethanolamine + L-serine = a 1,2-diacyl-sn-glycero-3-phospho-L-serine + ethanolamine. The enzyme catalyses 1-hexadecanoyl-2-(9Z-octadecenoyl)-sn-glycero-3-phosphoethanolamine + L-serine = 1-hexadecanoyl-2-(9Z-octadecenoyl)-sn-glycero-3-phospho-L-serine + ethanolamine. It catalyses the reaction 1-hexadecanoyl-2-(4Z,7Z,10Z,13Z,16Z,19Z-docosahexaenoyl)-sn-glycero-3-phosphoethanolamine + L-serine = 1-hexadecanoyl-2-(4Z,7Z,10Z,13Z,16Z,19Z-docosahexaenoyl)-sn-glycero-3-phosphoserine + ethanolamine. The catalysed reaction is 1-octadecanoyl-2-(5Z,8Z,11Z,14Z)-eicosatetraenoyl-sn-glycero-3-phosphoethanolamine + L-serine = 1-octadecanoyl-2-(5Z,8Z,11Z,14Z)-eicosatetraenoyl-sn-glycero-3-phosphoserine + ethanolamine. It carries out the reaction 1-octadecanoyl-2-(4Z,7Z,10Z,13Z,16Z,19Z-docosahexaenoyl)-sn-glycero-3-phosphoethanolamine + L-serine = 1-octadecanoyl-2-(4Z,7Z,10Z,13Z,16Z,19Z-docosahexaenoyl)-sn-glycero-3-phosphoserine + ethanolamine. The enzyme catalyses 1-(1Z-octadecenyl)-2-(4Z,7Z,10Z,13Z,16Z,19Z-docosahexaenoyl)-sn-glycero-3-phosphoethanolamine + L-serine = 1-(1Z-octadecenyl)-2-(4Z,7Z,10Z,13Z,16Z,19Z-docosahexaenoyl)-sn-glycero-3-phospho-L-serine + ethanolamine. It catalyses the reaction 1-octadecanoyl-2-(9Z-octadecenoyl)-sn-glycero-3-phosphoethanolamine + L-serine = 1-octadecanoyl-2-(9Z-octadecenoyl)-sn-glycero-3-phospho-L-serine + ethanolamine. The catalysed reaction is 1-(1Z-octadecenyl)-2-(9Z-octadecenoyl)-sn-glycero-3-phosphoethanolamine + L-serine = 1-(1Z-octadecenyl)-2-(9Z-octadecenoyl)-sn-glycero-3-phospho-L-serine + ethanolamine. It carries out the reaction 1-(1Z-octadecenyl)-2-(5Z,8Z,11Z,14Z- eicosatetraenoyl)-sn-glycero-3-phosphoethanolamine + L-serine = 1-(1Z-octadecenyl)-2-(5Z,8Z,11Z,14Z-eicosatetraenoyl)-sn-glycero-3-phospho-L-serine + ethanolamine. Its pathway is phospholipid metabolism; phosphatidylserine biosynthesis. Requires calcium ions. Inhibited by exogenous phosphatidylserine. Catalyzes a base-exchange reaction in which the polar head group of phosphatidylethanolamine (PE) or phosphatidylcholine (PC) is replaced by L-serine. Catalyzes the conversion of phosphatatidylethanolamine and does not act on phosphatidylcholine. Can utilize both phosphatidylethanolamine (PE) plasmalogen and diacyl PE as substrate and the latter is six times better utilized, indicating the importance of an ester linkage at the sn-1 position. Although it shows no sn-1 fatty acyl preference, exhibits significant preference towards docosahexaenoic acid (22:6n-3) compared with 18:1 or 20:4 at the sn-2 position. This Homo sapiens (Human) protein is Phosphatidylserine synthase 2 (PTDSS2).